A 369-amino-acid chain; its full sequence is UPF0754 membrane protein Aflv_2299 (369 aa).

The next 2 membrane-spanning stretches (helical) occupy residues 1-21 and 347-367; these read MGLF…GGMT and YLGA…TFFV.

This sequence belongs to the UPF0754 family.

The protein localises to the cell membrane. The protein is UPF0754 membrane protein Aflv_2299 of Anoxybacillus flavithermus (strain DSM 21510 / WK1).